Reading from the N-terminus, the 214-residue chain is Ribosomal RNA small subunit methyltransferase G (214 aa).

Residues Gly-81, Met-86, 132–133, and Arg-147 each bind S-adenosyl-L-methionine; that span reads VE.

This sequence belongs to the methyltransferase superfamily. RNA methyltransferase RsmG family.

Its subcellular location is the cytoplasm. It catalyses the reaction guanosine(527) in 16S rRNA + S-adenosyl-L-methionine = N(7)-methylguanosine(527) in 16S rRNA + S-adenosyl-L-homocysteine. Specifically methylates the N7 position of guanine in position 527 of 16S rRNA. The sequence is that of Ribosomal RNA small subunit methyltransferase G from Pseudomonas aeruginosa (strain UCBPP-PA14).